The primary structure comprises 71 residues: Large ribosomal subunit protein bL31 (71 aa).

4 residues coordinate Zn(2+): cysteine 16, cysteine 18, cysteine 38, and cysteine 41.

Belongs to the bacterial ribosomal protein bL31 family. Type A subfamily. Part of the 50S ribosomal subunit. Zn(2+) serves as cofactor.

Its function is as follows. Binds the 23S rRNA. This is Large ribosomal subunit protein bL31 from Laribacter hongkongensis (strain HLHK9).